Reading from the N-terminus, the 132-residue chain is Major pollen allergen Art v 1 (132 aa).

Positions M1–A24 are cleaved as a signal peptide. The tract at residues K28–C77 is defensin-like domain. 4 disulfides stabilise this stretch: C30–C77, C41–C61, C46–C71, and C50–C73. Epitope recognized by IgE antibodies of mugwort pollen-sensitized patients stretches follow at residues R64–S70 and K79–A87. The segment at P81 to H132 is disordered. Over residues G83–A114 the composition is skewed to pro residues. Over residues D115–G124 the composition is skewed to low complexity.

It in the N-terminal section; belongs to the DEFL family. In terms of processing, the mature protein extracted from the plant exhibits an average rate of 76% of hydroxyprolines. Post-translationally, O-glycosylated. O-linkage of 3 galactoses plus 9-16 or 21-23 arabinose residues attached on one or two hydroxyprolines.

Its subcellular location is the secreted. This is Major pollen allergen Art v 1 from Artemisia vulgaris (Mugwort).